The primary structure comprises 682 residues: E3 ubiquitin-protein ligase RNF103 (682 aa).

A run of 4 helical transmembrane segments spans residues 6 to 26 (FFLL…EAIV), 326 to 346 (LFVL…FITQ), 366 to 386 (LLII…LDSF), and 411 to 431 (MFYS…GLLI). Residues 525-542 (EEMSESSQDTENDSDSDN) show a composition bias toward acidic residues. The tract at residues 525 to 549 (EEMSESSQDTENDSDSDNTDTFSSS) is disordered. The RING-type zinc-finger motif lies at 618-660 (CVVCLENFENGCLLMGLPCGHVFHQNCIVMWLAGGRHCCPVCR).

As to quaternary structure, interacts with DERL1 and VCP. As to expression, expressed in different tissues including hippocampus, cerebral cortex, heart, kidney, spleen and lung. Expression is increased in hippocampus and frontal cortex after chronic treatment with antidepressants.

It is found in the endoplasmic reticulum membrane. It carries out the reaction S-ubiquitinyl-[E2 ubiquitin-conjugating enzyme]-L-cysteine + [acceptor protein]-L-lysine = [E2 ubiquitin-conjugating enzyme]-L-cysteine + N(6)-ubiquitinyl-[acceptor protein]-L-lysine.. It functions in the pathway protein modification; protein ubiquitination. Its function is as follows. Acts as an E2-dependent E3 ubiquitin-protein ligase, probably involved in the ER-associated protein degradation pathway. The protein is E3 ubiquitin-protein ligase RNF103 (Rnf103) of Rattus norvegicus (Rat).